The primary structure comprises 323 residues: Lipoyl synthase (323 aa).

The interval 1–27 (MVTILDRTSSDEKRIRHPEKAHRPDTE) is disordered. Residues Cys-61, Cys-66, Cys-72, Cys-87, Cys-91, Cys-94, and Ser-300 each coordinate [4Fe-4S] cluster. The region spanning 73-289 (WEKKHATFMI…ETVAYAKGFL (217 aa)) is the Radical SAM core domain.

The protein belongs to the radical SAM superfamily. Lipoyl synthase family. Requires [4Fe-4S] cluster as cofactor.

Its subcellular location is the cytoplasm. The enzyme catalyses [[Fe-S] cluster scaffold protein carrying a second [4Fe-4S](2+) cluster] + N(6)-octanoyl-L-lysyl-[protein] + 2 oxidized [2Fe-2S]-[ferredoxin] + 2 S-adenosyl-L-methionine + 4 H(+) = [[Fe-S] cluster scaffold protein] + N(6)-[(R)-dihydrolipoyl]-L-lysyl-[protein] + 4 Fe(3+) + 2 hydrogen sulfide + 2 5'-deoxyadenosine + 2 L-methionine + 2 reduced [2Fe-2S]-[ferredoxin]. Its pathway is protein modification; protein lipoylation via endogenous pathway; protein N(6)-(lipoyl)lysine from octanoyl-[acyl-carrier-protein]: step 2/2. Its function is as follows. Catalyzes the radical-mediated insertion of two sulfur atoms into the C-6 and C-8 positions of the octanoyl moiety bound to the lipoyl domains of lipoate-dependent enzymes, thereby converting the octanoylated domains into lipoylated derivatives. This chain is Lipoyl synthase, found in Agrobacterium fabrum (strain C58 / ATCC 33970) (Agrobacterium tumefaciens (strain C58)).